The primary structure comprises 234 residues: (5-formylfuran-3-yl)methyl phosphate synthase (234 aa).

The active-site Schiff-base intermediate with substrate is the K27. K85 functions as the Proton acceptor in the catalytic mechanism.

It belongs to the MfnB family.

It catalyses the reaction 2 D-glyceraldehyde 3-phosphate = 4-(hydroxymethyl)-2-furancarboxaldehyde phosphate + phosphate + 2 H2O. It participates in cofactor biosynthesis; methanofuran biosynthesis. Catalyzes the formation of 4-(hydroxymethyl)-2-furancarboxaldehyde phosphate (4-HFC-P) from two molecules of glyceraldehyde-3-P (GA-3-P). The sequence is that of (5-formylfuran-3-yl)methyl phosphate synthase from Methanosarcina mazei (strain ATCC BAA-159 / DSM 3647 / Goe1 / Go1 / JCM 11833 / OCM 88) (Methanosarcina frisia).